The chain runs to 202 residues: uncharacterized protein (202 aa).

3 consecutive transmembrane segments (helical) span residues 34–54 (AAYV…QARI), 102–122 (MGVA…PLVI), and 125–145 (ILPL…FNKA). A disordered region spans residues 165–202 (NKPAAAVTGTSSNSNNASAKSDGPTITELNENETEKSS). The span at 168-185 (AAAVTGTSSNSNNASAKS) shows a compositional bias: low complexity. Residues S185 and S201 each carry the phosphoserine modification.

Belongs to the PHO88 family.

The protein localises to the endoplasmic reticulum membrane. This is an uncharacterized protein from Schizosaccharomyces pombe (strain 972 / ATCC 24843) (Fission yeast).